The following is a 113-amino-acid chain: Large ribosomal subunit protein bL17 (113 aa).

It belongs to the bacterial ribosomal protein bL17 family. In terms of assembly, part of the 50S ribosomal subunit. Contacts protein L32.

The sequence is that of Large ribosomal subunit protein bL17 from Caldicellulosiruptor saccharolyticus (strain ATCC 43494 / DSM 8903 / Tp8T 6331).